We begin with the raw amino-acid sequence, 185 residues long: Ribosome-recycling factor (185 aa).

It belongs to the RRF family.

The protein resides in the cytoplasm. Functionally, responsible for the release of ribosomes from messenger RNA at the termination of protein biosynthesis. May increase the efficiency of translation by recycling ribosomes from one round of translation to another. This Francisella tularensis subsp. tularensis (strain FSC 198) protein is Ribosome-recycling factor.